Consider the following 261-residue polypeptide: MTGINLITSAPEVNSWAEAVEQDSAPHIQEGADGIRTETAFTEVDGVRYKVVTQFKVINKRVPKVVADRKKWVKFGSCKGEPAGPQVATTYVAEEVEMQFTRNRAGEQILDVQEDKQAAKTTSREHCRHCKGNDHWSTHCPYKVMYQLDEEADANQDADSKNALGLRGDGRQMERNRSDENTCRVTNLPQEMNEDELRDVFGRIGRVIRIFIARDKITGLPKGFAFVTFESRDDAARAIAELNDIRMYHMVLKVEWTRPSN.

The tract at residues 156–180 (QDADSKNALGLRGDGRQMERNRSDE) is disordered. Residues 168–180 (GDGRQMERNRSDE) are compositionally biased toward basic and acidic residues. The RRM domain occupies 181–259 (NTCRVTNLPQ…MVLKVEWTRP (79 aa)).

The protein belongs to the eIF-3 subunit G family. Component of the eukaryotic translation initiation factor 3 (eIF-3) complex.

The protein localises to the cytoplasm. Its function is as follows. RNA-binding component of the eukaryotic translation initiation factor 3 (eIF-3) complex, which is involved in protein synthesis of a specialized repertoire of mRNAs and, together with other initiation factors, stimulates binding of mRNA and methionyl-tRNAi to the 40S ribosome. The eIF-3 complex specifically targets and initiates translation of a subset of mRNAs involved in cell proliferation. This subunit can bind 18S rRNA. The sequence is that of Eukaryotic translation initiation factor 3 subunit G from Caenorhabditis briggsae.